Consider the following 632-residue polypeptide: SH2B adapter protein 2 (632 aa).

Y52 is modified (phosphotyrosine). A Phosphoserine modification is found at S141. The 114-residue stretch at 193–306 (DIQREGALRF…WVADIQGCVD (114 aa)) folds into the PH domain. At S310 the chain carries Phosphoserine. The segment at 381-409 (TLESPGGSGSDSNNTGEQGAETDPEAEPE) is disordered. Residues 400 to 409 (AETDPEAEPE) show a composition bias toward acidic residues. The SH2 domain maps to 417–515 (WFHGTLSRVK…SADITLRSYV (99 aa)). Disordered regions lie at residues 516-537 (RAQD…SPAC) and 558-632 (ASPS…YSFY). Over residues 519–532 (DPPPEPGPTPPAAP) the composition is skewed to pro residues. Composition is skewed to low complexity over residues 558-579 (ASPS…AASG) and 604-626 (EAVA…RAVE). Y629 bears the Phosphotyrosine mark.

This sequence belongs to the SH2B adapter family. In terms of assembly, homodimer. Interacts with KIT/c-KIT, SHC1, EPOR, PDGFR, VAV1 and VAV3. Interacts (via N-terminal region) with SHC1. Interacts (via the phosphorylated C-terminus) with GRB2. Interacts (via its SH2 domain) with EPOR, INSR and KIT. Interacts with GRB2 after B-cell antigen receptor stimulation. Interacts (via PH domain) with VAV3. Interacts with NTRK1, NTRK2 and NTRK3 (phosphorylated); after stimulation of the receptor by its extracellular ligand and subsequent autophosphorylation of the receptor. Binds INSR, GRB2, ASB6 and CAP. Insulin stimulation leads to dissociation of CAP. Binds CBS only when SH2B2/APS has become phosphorylated. INSR binding does not depend on the phosphorylation of SH2B2/APS. Post-translationally, tyrosine phosphorylated by JAK2, KIT and other kinases activated by B-cell receptor in response to stimulation with cytokines, IL3, IL5, PDGF, IGF1, IGF2, CSF2/GM-CSF and cross-linking of the B-cell receptor complex. Expressed in spleen, prostate, testis, uterus, small intestine and skeletal muscle. Among hematopoietic cell lines, expressed exclusively in B-cells. Not expressed in most tumor cell lines.

It localises to the cytoplasm. It is found in the cell membrane. Its function is as follows. Adapter protein for several members of the tyrosine kinase receptor family. Involved in multiple signaling pathways. May be involved in coupling from immunoreceptor to Ras signaling. Acts as a negative regulator of cytokine signaling in collaboration with CBL. Binds to EPOR and suppresses EPO-induced STAT5 activation, possibly through a masking effect on STAT5 docking sites in EPOR. Suppresses PDGF-induced mitogenesis. May induce cytoskeletal reorganization via interaction with VAV3. The chain is SH2B adapter protein 2 (SH2B2) from Homo sapiens (Human).